Consider the following 429-residue polypeptide: Ribosomal RNA small subunit methyltransferase B (429 aa).

S-adenosyl-L-methionine-binding positions include cysteine 254–lysine 260, aspartate 277, aspartate 303, and aspartate 322. Cysteine 375 functions as the Nucleophile in the catalytic mechanism.

It belongs to the class I-like SAM-binding methyltransferase superfamily. RsmB/NOP family.

The protein resides in the cytoplasm. It catalyses the reaction cytidine(967) in 16S rRNA + S-adenosyl-L-methionine = 5-methylcytidine(967) in 16S rRNA + S-adenosyl-L-homocysteine + H(+). In terms of biological role, specifically methylates the cytosine at position 967 (m5C967) of 16S rRNA. The sequence is that of Ribosomal RNA small subunit methyltransferase B from Pectobacterium carotovorum subsp. carotovorum (strain PC1).